Here is a 446-residue protein sequence, read N- to C-terminus: tRNA modification GTPase MnmE (446 aa).

3 residues coordinate (6S)-5-formyl-5,6,7,8-tetrahydrofolate: Arg22, Glu80, and Lys119. A TrmE-type G domain is found at 215-370 (GLSLVIAGRP…LKKVIKQVVG (156 aa)). Asn225 serves as a coordination point for K(+). Residues 225–230 (NAGKST), 244–250 (TEIAGTT), and 269–272 (DTAG) contribute to the GTP site. Position 229 (Ser229) interacts with Mg(2+). Positions 244, 246, and 249 each coordinate K(+). Residue Thr250 coordinates Mg(2+). Lys446 is a (6S)-5-formyl-5,6,7,8-tetrahydrofolate binding site.

It belongs to the TRAFAC class TrmE-Era-EngA-EngB-Septin-like GTPase superfamily. TrmE GTPase family. In terms of assembly, homodimer. Heterotetramer of two MnmE and two MnmG subunits. The cofactor is K(+).

It localises to the cytoplasm. In terms of biological role, exhibits a very high intrinsic GTPase hydrolysis rate. Involved in the addition of a carboxymethylaminomethyl (cmnm) group at the wobble position (U34) of certain tRNAs, forming tRNA-cmnm(5)s(2)U34. The polypeptide is tRNA modification GTPase MnmE (Legionella pneumophila (strain Paris)).